The following is a 304-amino-acid chain: Porphobilinogen deaminase (304 aa).

Position 240 is an S-(dipyrrolylmethanemethyl)cysteine (C240).

The protein belongs to the HMBS family. As to quaternary structure, monomer. It depends on dipyrromethane as a cofactor.

It catalyses the reaction 4 porphobilinogen + H2O = hydroxymethylbilane + 4 NH4(+). The protein operates within porphyrin-containing compound metabolism; protoporphyrin-IX biosynthesis; coproporphyrinogen-III from 5-aminolevulinate: step 2/4. Functionally, tetrapolymerization of the monopyrrole PBG into the hydroxymethylbilane pre-uroporphyrinogen in several discrete steps. The polypeptide is Porphobilinogen deaminase (Xanthomonas euvesicatoria pv. vesicatoria (strain 85-10) (Xanthomonas campestris pv. vesicatoria)).